Reading from the N-terminus, the 116-residue chain is Ribosome-binding factor A (116 aa).

It belongs to the RbfA family. As to quaternary structure, monomer. Binds 30S ribosomal subunits, but not 50S ribosomal subunits or 70S ribosomes.

The protein localises to the cytoplasm. One of several proteins that assist in the late maturation steps of the functional core of the 30S ribosomal subunit. Associates with free 30S ribosomal subunits (but not with 30S subunits that are part of 70S ribosomes or polysomes). Required for efficient processing of 16S rRNA. May interact with the 5'-terminal helix region of 16S rRNA. The polypeptide is Ribosome-binding factor A (Streptococcus pyogenes serotype M28 (strain MGAS6180)).